A 541-amino-acid polypeptide reads, in one-letter code: Atrial natriuretic peptide receptor 3 (541 aa).

A signal peptide spans 1-26; the sequence is MPSLLVLTFSPCVLLGWALLAGGTGG. Over 27–481 the chain is Extracellular; sequence GGVGGGGGGA…PCKSSGGLEE (455 aa). N-linked (GlcNAc...) (complex) asparagine glycosylation is present at Asn86. Ser106, Val135, and Cys136 together coordinate chloride. 2 disulfides stabilise this stretch: Cys108–Cys136 and Cys213–Cys261. N-linked (GlcNAc...) (high mannose) asparagine glycosylation occurs at Asn293. Asn394 carries N-linked (GlcNAc...) (complex) asparagine glycosylation. The helical transmembrane segment at 482–504 threads the bilayer; it reads SAVTGIVVGALLGAGLLMAFYFF. Residues 505–541 are Cytoplasmic-facing; that stretch reads RKKYRITIERRTQQEESNLGKHRELREDSIRSHFSVA.

It belongs to the ANF receptor family. In terms of assembly, homodimer; disulfide-linked. Dimers can also be formed through the C-terminal cysteine of isoform 2. Interacts with OSTN.

It localises to the cell membrane. Functionally, receptor for the natriuretic peptide hormones, binding with similar affinities atrial natriuretic peptide NPPA/ANP, brain natriuretic peptide NPPB/BNP, and C-type natriuretic peptide NPPC/CNP. May function as a clearance receptor for NPPA, NPPB and NPPC, regulating their local concentrations and effects. Acts as a regulator of osteoblast differentiation and bone growth by binding to its ligand osteocrin, thereby preventing binding between NPR3/NPR-C and natriuretic peptides, leading to increase cGMP production. This chain is Atrial natriuretic peptide receptor 3 (NPR3), found in Homo sapiens (Human).